The following is a 323-amino-acid chain: Fructose-1,6-bisphosphatase class 1 (323 aa).

The Mg(2+) site is built by Glu-84, Asp-103, Leu-105, and Asp-106. Substrate contacts are provided by residues 106–109 (DGSS), Asn-198, and Lys-264. Glu-270 serves as a coordination point for Mg(2+).

It belongs to the FBPase class 1 family. As to quaternary structure, homotetramer. Mg(2+) is required as a cofactor.

It is found in the cytoplasm. The catalysed reaction is beta-D-fructose 1,6-bisphosphate + H2O = beta-D-fructose 6-phosphate + phosphate. The protein operates within carbohydrate biosynthesis; gluconeogenesis. In Pseudoalteromonas atlantica (strain T6c / ATCC BAA-1087), this protein is Fructose-1,6-bisphosphatase class 1.